A 1280-amino-acid polypeptide reads, in one-letter code: Pullulanase A (1280 aa).

The signal sequence occupies residues 1 to 44 (MRKTPSHTEKKMVYSIRSLKNGTGSVLIGASLVLLAMATPTISS). The interval 42 to 132 (ISSDESTPTT…VTTETKAEEP (91 aa)) is disordered. Positions 48-61 (TPTTNEPNNRNTTT) are enriched in low complexity. Residues 79–90 (DISSPGNANASL) show a composition bias toward polar residues. Residues 115-126 (EPTTSTSPVTTE) show a composition bias toward low complexity. Residues 156–158 (WTW), Trp-168, Asp-214, 263–265 (WYW), Trp-276, Lys-318, and Asn-323 contribute to the substrate site. Residues Ser-661 and Tyr-663 each coordinate Ca(2+). Substrate contacts are provided by residues 667–668 (YD) and Phe-743. The Nucleophile role is filled by Asp-778. Glu-807 functions as the Proton donor in the catalytic mechanism. Trp-809 contacts substrate. 3 residues coordinate Ca(2+): Met-828, Thr-831, and Asp-832. Substrate is bound by residues Asp-839, Arg-842, and Tyr-849. The Ca(2+) site is built by Asp-882 and Asp-886. Substrate-binding positions include Asn-896, Lys-969, and 989–991 (DSY). Asp-992 is a binding site for Ca(2+). The interval 1140-1248 (VSQNGTSHES…TPDKQAELPN (109 aa)) is disordered. Residues 1149 to 1196 (STAEEKPDSTPSKPEHQNEASHPAHQDPAPEARPDSTKPDAKVADAEN) are compositionally biased toward basic and acidic residues. Residues 1205-1218 (SQAEQPAQEAQASS) are compositionally biased toward low complexity. Residues 1246–1250 (LPNTG) carry the LPXTG sorting signal motif. Thr-1249 carries the post-translational modification Pentaglycyl murein peptidoglycan amidated threonine. Residues 1250–1280 (GIKNENKLLFAGISLLALLGLGFLLKNKKEN) constitute a propeptide, removed by sortase.

This sequence belongs to the glycosyl hydrolase 13 family.

The protein localises to the secreted. It is found in the cell wall. Its subcellular location is the cell surface. It catalyses the reaction Hydrolysis of (1-&gt;6)-alpha-D-glucosidic linkages in pullulan, amylopectin and glycogen, and in the alpha- and beta-limit dextrins of amylopectin and glycogen.. With respect to regulation, inhibited by 4-O-alpha-D-glucopyranosylmoranoline (G1M). Its function is as follows. Virulence factor. Involved in the degradation of glycogen of the mammalian host cells. Hydrolyzes the alpha-1,6-branchpoints of glycogen. Hydrolyzes pullulan. Does not hydrolyze dextran. Binds to mouse lung alveolar type II cells that are rich in glycogen stores. Is an alpha-glucan-specific carbohydrate-binding protein, which binds to amylose (pure alpha-(1,4)-linked glucose), amylopectin (alpha-(1,4)-linked glucose with alpha-(1,6) branch points), pullulan (linear polymer of mixed alpha-(1,4)- and alpha-(1,6)-linked glucose) and glycogen (similar to amylopectin with more frequent alpha-(1,6) branch points) in vitro. Does not bind to dextran (a linear polymer of alpha-(1,6)-linked glucose). The polypeptide is Pullulanase A (Streptococcus pneumoniae serotype 4 (strain ATCC BAA-334 / TIGR4)).